The chain runs to 391 residues: MEGAFAANWSAEAVNGSAAPPGTEGNRTAGPPQRNEALARVEVAVLSLILFLALSGNACVLLALRTTRHKHSRLFFFMKHLSIADLAVAVFQVLPQLLWDITFRFYGPDLLCRLVKYLQVVGMFASTYLLLLMSLDRCLAICQPLRSLRRRTDRLAVLATWLGCLVASAPQVHIFSLREVADGVFDCWAVFIQPWGPKAYITWITLAVYIVPVIVLAACYGLISFKIWQNLRLKTEAAAAEASAGAEGAAADCAGRAALARVSNVKLISKAKIRTVKMTFIVVLAFIVCWTPFFFKQMWSVWDADAPKEASAFIIAMLLASLNSCCNPWIYMLFTGHLFQDLVQRFLCCSFRRLKGSQLGETSVTKKIHSYTFVLSRHSSSQRSCSQPSTV.

At 1–38 (MEGAFAANWSAEAVNGSAAPPGTEGNRTAGPPQRNEAL) the chain is on the extracellular side. Residues Asn-8, Asn-15, and Asn-26 are each glycosylated (N-linked (GlcNAc...) asparagine). A helical membrane pass occupies residues 39–63 (ARVEVAVLSLILFLALSGNACVLLA). Over 64-74 (LRTTRHKHSRL) the chain is Cytoplasmic. A helical transmembrane segment spans residues 75–97 (FFFMKHLSIADLAVAVFQVLPQL). Residues 98–113 (LWDITFRFYGPDLLCR) are Extracellular-facing. A disulfide bridge connects residues Cys-112 and Cys-187. The helical transmembrane segment at 114–135 (LVKYLQVVGMFASTYLLLLMSL) threads the bilayer. Residues 136–154 (DRCLAICQPLRSLRRRTDR) lie on the Cytoplasmic side of the membrane. The chain crosses the membrane as a helical span at residues 155–175 (LAVLATWLGCLVASAPQVHIF). Residues 176 to 202 (SLREVADGVFDCWAVFIQPWGPKAYIT) are Extracellular-facing. A helical membrane pass occupies residues 203–225 (WITLAVYIVPVIVLAACYGLISF). At 226 to 277 (KIWQNLRLKTEAAAAEASAGAEGAAADCAGRAALARVSNVKLISKAKIRTVK) the chain is on the cytoplasmic side. The chain crosses the membrane as a helical span at residues 278–296 (MTFIVVLAFIVCWTPFFFK). Topologically, residues 297–311 (QMWSVWDADAPKEAS) are extracellular. The helical transmembrane segment at 312-334 (AFIIAMLLASLNSCCNPWIYMLF) threads the bilayer. Topologically, residues 335–391 (TGHLFQDLVQRFLCCSFRRLKGSQLGETSVTKKIHSYTFVLSRHSSSQRSCSQPSTV) are cytoplasmic. Ser-370 bears the Phosphoserine mark.

The protein belongs to the G-protein coupled receptor 1 family. Vasopressin/oxytocin receptor subfamily.

It localises to the cell membrane. Its function is as follows. Receptor for oxytocin. The activity of this receptor is mediated by G proteins which activate a phosphatidylinositol-calcium second messenger system. This chain is Oxytocin receptor (OXTR), found in Ovis aries (Sheep).